Here is a 377-residue protein sequence, read N- to C-terminus: UDP-N-acetylenolpyruvoylglucosamine reductase (377 aa).

Residues 48 to 215 (LGGTPMAAVR…LGITLQLHTD (168 aa)) enclose the FAD-binding PCMH-type domain. The active site involves R193. The active-site Proton donor is S268. The active site involves E369.

The protein belongs to the MurB family. Requires FAD as cofactor.

Its subcellular location is the cytoplasm. It catalyses the reaction UDP-N-acetyl-alpha-D-muramate + NADP(+) = UDP-N-acetyl-3-O-(1-carboxyvinyl)-alpha-D-glucosamine + NADPH + H(+). It functions in the pathway cell wall biogenesis; peptidoglycan biosynthesis. Functionally, cell wall formation. The sequence is that of UDP-N-acetylenolpyruvoylglucosamine reductase from Corynebacterium diphtheriae (strain ATCC 700971 / NCTC 13129 / Biotype gravis).